The following is a 280-amino-acid chain: Phosphatidylserine decarboxylase proenzyme (280 aa).

Catalysis depends on charge relay system; for autoendoproteolytic cleavage activity residues Asp88, His145, and Ser248. Residue Ser248 is the Schiff-base intermediate with substrate; via pyruvic acid; for decarboxylase activity of the active site. Ser248 carries the post-translational modification Pyruvic acid (Ser); by autocatalysis.

The protein belongs to the phosphatidylserine decarboxylase family. PSD-B subfamily. Prokaryotic type I sub-subfamily. In terms of assembly, heterodimer of a large membrane-associated beta subunit and a small pyruvoyl-containing alpha subunit. Pyruvate serves as cofactor. In terms of processing, is synthesized initially as an inactive proenzyme. Formation of the active enzyme involves a self-maturation process in which the active site pyruvoyl group is generated from an internal serine residue via an autocatalytic post-translational modification. Two non-identical subunits are generated from the proenzyme in this reaction, and the pyruvate is formed at the N-terminus of the alpha chain, which is derived from the carboxyl end of the proenzyme. The autoendoproteolytic cleavage occurs by a canonical serine protease mechanism, in which the side chain hydroxyl group of the serine supplies its oxygen atom to form the C-terminus of the beta chain, while the remainder of the serine residue undergoes an oxidative deamination to produce ammonia and the pyruvoyl prosthetic group on the alpha chain. During this reaction, the Ser that is part of the protease active site of the proenzyme becomes the pyruvoyl prosthetic group, which constitutes an essential element of the active site of the mature decarboxylase.

The protein resides in the cell membrane. It carries out the reaction a 1,2-diacyl-sn-glycero-3-phospho-L-serine + H(+) = a 1,2-diacyl-sn-glycero-3-phosphoethanolamine + CO2. It participates in phospholipid metabolism; phosphatidylethanolamine biosynthesis; phosphatidylethanolamine from CDP-diacylglycerol: step 2/2. Its function is as follows. Catalyzes the formation of phosphatidylethanolamine (PtdEtn) from phosphatidylserine (PtdSer). The chain is Phosphatidylserine decarboxylase proenzyme from Methylobacillus flagellatus (strain ATCC 51484 / DSM 6875 / VKM B-1610 / KT).